We begin with the raw amino-acid sequence, 170 residues long: Centrin-2 (170 aa).

The interval 1 to 21 (MQRGALRGASPTARRRLVDRP) is disordered. 4 consecutive EF-hand domains span residues 26 to 61 (DEIEEIREAFNLFDTDGSGMIDPKELKAAMQSLGFE), 62 to 97 (TKNPTIYQMIADLDRDSGGPIDFEEFLDAITAKLGD), 99 to 134 (ESREGIQKIFSLFDDDRTGTITLKNLKRVAKELGET), and 135 to 170 (MSEDELREMLERADSNGDGEISFEDFYAIMTKKTFP). Positions 39, 41, 43, 45, and 50 each coordinate Ca(2+).

Belongs to the centrin family. In terms of assembly, monomer. Does not homooligomerize.

The protein localises to the cytoplasm. It localises to the cytoskeleton. Its subcellular location is the microtubule organizing center. The protein resides in the centrosome. Its function is as follows. In tachyzoites, plays an essential role in microneme secretion that ensures parasite motility and attachment to, invasion of and egress from host cells. Also involved in the architecture of the peripheral annuli where it appears to regulate the localization of PAP2. In association with the myosin motor MyoJ, involved in the constriction of the basal complex at the end of daughter cell division in an actin-dependent manner; the basal complex is a cytoskeletal structure formed at the tachyzoite basal pole during daughter cell formation. May be involved in parasite replication. In Toxoplasma gondii (strain ATCC 50611 / Me49), this protein is Centrin-2.